The chain runs to 453 residues: Sialic acid-binding Ig-like lectin 6 (453 aa).

Positions 1–26 are cleaved as a signal peptide; the sequence is MQGAQEASASEMLPLLLPLLWAGALA. Over 27–347 the chain is Extracellular; the sequence is QERRFQLEGP…WKPEGRAGGV (321 aa). Residues 28–123 enclose the Ig-like V-type domain; the sequence is ERRFQLEGPE…RDNAAYFFRL (96 aa). Cystine bridges form between C46–C172, C51–C104, and C166–C215. N-linked (GlcNAc...) asparagine glycosylation is present at N103. Residue R122 coordinates N-acetylneuraminate. The Ig-like C2-type 1 domain maps to 148–231; the sequence is PNISIPGTLE…AGVTMERTIQ (84 aa). Residues N149 and N163 are each glycosylated (N-linked (GlcNAc...) asparagine). N-linked (GlcNAc...) asparagine glycosylation is present at N233. Residues 238–333 form the Ig-like C2-type 2 domain; the sequence is PQKVAISIFQ…PLGSLQISLS (96 aa). Cysteines 274 and 319 form a disulfide. The helical transmembrane segment at 348–368 threads the bilayer; the sequence is LGAVWGASITTLVFLCVCFIF. Residues 369–453 lie on the Cytoplasmic side of the membrane; that stretch reads RVKTRRKKAA…TEYSEIKIHK (85 aa). The ITIM motif signature appears at 424 to 429; sequence LHYAVL. Positions 444–449 match the SLAM-like motif motif; the sequence is TEYSEI.

Belongs to the immunoglobulin superfamily. SIGLEC (sialic acid binding Ig-like lectin) family. In terms of assembly, interacts with LEP. Expressed at high levels in placenta (cyto- and syncytiotrophoblastic cells) and at lower levels in spleen, peripheral blood leukocytes (predominantly B-cells) and small intestine.

The protein localises to the cell membrane. It localises to the secreted. Its function is as follows. Putative adhesion molecule that mediates sialic-acid dependent binding to cells. Binds to alpha-2,6-linked sialic acid. The sialic acid recognition site may be masked by cis interactions with sialic acids on the same cell surface. The chain is Sialic acid-binding Ig-like lectin 6 (SIGLEC6) from Homo sapiens (Human).